Here is a 552-residue protein sequence, read N- to C-terminus: Cilia- and flagella- associated protein 210 (552 aa).

Coiled coils occupy residues 53 to 143 (DEWK…NAKQ), 186 to 307 (EEQL…KKRL), 348 to 409 (IARD…VMKA), and 460 to 488 (TEALVAEKEKEFQDYAREVIELESETTNK). The segment at 216–238 (KDHLKQIKEHEEEEERRKKYEEK) is disordered.

As to quaternary structure, microtubule inner protein component of sperm flagellar doublet microtubules. Expressed in airway epithelial cells.

The protein localises to the cytoplasm. It localises to the cytoskeleton. The protein resides in the cilium axoneme. Its subcellular location is the flagellum axoneme. Its function is as follows. Microtubule inner protein (MIP) part of the dynein-decorated doublet microtubules (DMTs) in cilia axoneme, which is required for motile cilia beating. This is Cilia- and flagella- associated protein 210 from Homo sapiens (Human).